The sequence spans 438 residues: tRNA modification GTPase MnmE (438 aa).

R20, E79, and K119 together coordinate (6S)-5-formyl-5,6,7,8-tetrahydrofolate. Residues 215–360 form the TrmE-type G domain; that stretch reads GVEVAIVGPP…LEAALAARVG (146 aa). GTP-binding positions include 225–230, 244–250, and 269–272; these read NAGKSS, SDEAGTT, and DTAG. Residues S229 and T250 each contribute to the Mg(2+) site. Residue K438 participates in (6S)-5-formyl-5,6,7,8-tetrahydrofolate binding.

It belongs to the TRAFAC class TrmE-Era-EngA-EngB-Septin-like GTPase superfamily. TrmE GTPase family. In terms of assembly, homodimer. Heterotetramer of two MnmE and two MnmG subunits. K(+) is required as a cofactor.

Its subcellular location is the cytoplasm. Functionally, exhibits a very high intrinsic GTPase hydrolysis rate. Involved in the addition of a carboxymethylaminomethyl (cmnm) group at the wobble position (U34) of certain tRNAs, forming tRNA-cmnm(5)s(2)U34. This is tRNA modification GTPase MnmE from Parvibaculum lavamentivorans (strain DS-1 / DSM 13023 / NCIMB 13966).